The following is a 35-amino-acid chain: Manganese peroxidase (35 aa).

The segment covering 1–11 (LSLLGHDERVT) has biased composition (basic and acidic residues). The disordered stretch occupies residues 1 to 35 (LSLLGHDERVTPEPFDSVTAQNARGNQADVQSLPR). The segment covering 18 to 35 (VTAQNARGNQADVQSLPR) has biased composition (polar residues).

The protein belongs to the peroxidase family. It depends on heme b as a cofactor. Ca(2+) serves as cofactor.

It carries out the reaction 2 Mn(2+) + H2O2 + 2 H(+) = 2 Mn(3+) + 2 H2O. Has manganese peroxidase activity. The polypeptide is Manganese peroxidase (Irpex lacteus (Milk-white toothed polypore)).